The chain runs to 400 residues: Argininosuccinate synthase (400 aa).

Residues 10-18 (AYSGGVDTS) and Ala-38 each bind ATP. Position 89 (Tyr-89) interacts with L-citrulline. Gly-119 serves as a coordination point for ATP. 3 residues coordinate L-aspartate: Thr-121, Asn-125, and Asp-126. Asn-125 contacts L-citrulline. Positions 129, 177, 186, 262, and 274 each coordinate L-citrulline.

Belongs to the argininosuccinate synthase family. Type 1 subfamily. As to quaternary structure, homotetramer.

Its subcellular location is the cytoplasm. It carries out the reaction L-citrulline + L-aspartate + ATP = 2-(N(omega)-L-arginino)succinate + AMP + diphosphate + H(+). Its pathway is amino-acid biosynthesis; L-arginine biosynthesis; L-arginine from L-ornithine and carbamoyl phosphate: step 2/3. This chain is Argininosuccinate synthase, found in Nostoc punctiforme (strain ATCC 29133 / PCC 73102).